Here is a 268-residue protein sequence, read N- to C-terminus: DNA repair protein RecO (268 aa).

This sequence belongs to the RecO family.

Its function is as follows. Involved in DNA repair and RecF pathway recombination. The sequence is that of DNA repair protein RecO from Mycobacterium leprae (strain Br4923).